A 660-amino-acid polypeptide reads, in one-letter code: Leucine-rich repeat transmembrane protein FLRT2 (660 aa).

A signal peptide spans 1–35 (MGLQTTKWPSHGAFFLKSWLIISLGLYSQVSKLLA). 2 cysteine pairs are disulfide-bonded: Cys36–Cys42 and Cys40–Cys49. In terms of domain architecture, LRRNT spans 36–63 (CPSVCRCDRNFVYCNERSLTSVPLGIPE). Over 36 to 541 (CPSVCRCDRN…TTSHSMGSPF (506 aa)) the chain is Extracellular. LRR repeat units lie at residues 64–85 (GVTV…AELH), 89–109 (SVHT…NLPK), 110–131 (NVRV…ALAQ), 134–155 (KLEE…DGAF), 160–181 (SLKL…LPVD), 182–202 (LQEL…AFQN), 205–225 (SLER…AEGT), 231–252 (KLKE…LPGT), 253–274 (HLIR…AFSN), and 277–298 (KLER…VFDN). An N-linked (GlcNAc...) asparagine glycan is attached at Asn202. Asn298 carries N-linked (GlcNAc...) asparagine glycosylation. Residues 310–362 (NPWFCDCSIKWVTEWLKYIPSSLNVRGFMCQGPEQVRGMAVRELNMNLLSCPT) enclose the LRRCT domain. Disulfide bonds link Cys314–Cys339 and Cys316–Cys360. Over residues 373-409 (APSTASPTTQPPTLSIPNPSRSYTPPTPTTSKLPTIP) the composition is skewed to low complexity. The tract at residues 373–413 (APSTASPTTQPPTLSIPNPSRSYTPPTPTTSKLPTIPDWDG) is disordered. The Fibronectin type-III domain maps to 419-517 (PPISERIQLS…ICSEATTHAS (99 aa)). N-linked (GlcNAc...) asparagine glycans are attached at residues Asn433 and Asn521. The chain crosses the membrane as a helical span at residues 542–562 (LLAGLIGGAVIFVLVVLLSVF). Topologically, residues 563–660 (CWHMHKKGRY…SVPDLEHCHT (98 aa)) are cytoplasmic.

Self-associates (via leucine-rich repeats), giving rise to homooligomers. Interacts with FGFR1. Interacts with FGFR2. Interacts (via extracellular domain) with ADGRL1/LPHN1. Interacts (via extracellular domain) with ADGRL3 (via olfactomedin-like domain). Interacts (via extracellular domain) with UNC5D (via the first Ig-like domain). Can also interact (via extracellular domain) with UNC5B, but with much lower affinity. Interacts (via extracellular domain) with FN1. N-glycosylated. Post-translationally, proteolytic cleavage in the juxtamembrane region gives rise to a soluble ectodomain. Cleavage is probably effected by a metalloprotease. In terms of tissue distribution, expressed in pancreas, skeletal muscle, brain, and heart.

The protein resides in the cell membrane. Its subcellular location is the endoplasmic reticulum membrane. The protein localises to the cell junction. It is found in the focal adhesion. It localises to the secreted. The protein resides in the extracellular space. Its subcellular location is the extracellular matrix. The protein localises to the microsome membrane. It is found in the synapse. It localises to the synaptosome. Its function is as follows. Functions in cell-cell adhesion, cell migration and axon guidance. Mediates cell-cell adhesion via its interactions with ADGRL3 and probably also other latrophilins that are expressed at the surface of adjacent cells. May play a role in the migration of cortical neurons during brain development via its interaction with UNC5D. Mediates axon growth cone collapse and plays a repulsive role in neuron guidance via its interaction with UNC5D, and possibly also other UNC-5 family members. Plays a role in fibroblast growth factor-mediated signaling cascades. Required for normal organization of the cardiac basement membrane during embryogenesis, and for normal embryonic epicardium and heart morphogenesis. The chain is Leucine-rich repeat transmembrane protein FLRT2 (FLRT2) from Homo sapiens (Human).